Consider the following 284-residue polypeptide: MKQKVVSIGDINVANDLPFVLFGGMNVLESRDLAMRICEHYVTVTQKLGIPYVFKASFDKANRSSIHSYRGPGLEEGMKIFQELKQTFGVKIITDVHEASQAQPVADVVDVIQLPAFLARQTDLVEAMAKTGAVINVKKPQFVSPGQMGNIVDKFIEGGNDKVILCDRGANFGYDNLVVDMLGFGVMKKASNNSPVIFDVTHALQCRDPFGAASGGRRAQVSELARAGMAVGIAGLFIEAHPDPDHAKCDGPSALPLDKLEPFLKQMKAIDDLVKSFDELDTSK.

This sequence belongs to the KdsA family.

Its subcellular location is the cytoplasm. It carries out the reaction D-arabinose 5-phosphate + phosphoenolpyruvate + H2O = 3-deoxy-alpha-D-manno-2-octulosonate-8-phosphate + phosphate. It functions in the pathway carbohydrate biosynthesis; 3-deoxy-D-manno-octulosonate biosynthesis; 3-deoxy-D-manno-octulosonate from D-ribulose 5-phosphate: step 2/3. The protein operates within bacterial outer membrane biogenesis; lipopolysaccharide biosynthesis. The polypeptide is 2-dehydro-3-deoxyphosphooctonate aldolase (Klebsiella pneumoniae subsp. pneumoniae (strain ATCC 700721 / MGH 78578)).